The chain runs to 463 residues: L-seryl-tRNA(Sec) selenium transferase (463 aa).

K295 is modified (N6-(pyridoxal phosphate)lysine).

It belongs to the SelA family. In terms of assembly, homodecamer; pentamer of dimers. Binds only one seryl-tRNA(Sec) per dimer. The cofactor is pyridoxal 5'-phosphate.

The protein resides in the cytoplasm. The enzyme catalyses L-seryl-tRNA(Sec) + selenophosphate + H(+) = L-selenocysteinyl-tRNA(Sec) + phosphate. Its pathway is aminoacyl-tRNA biosynthesis; selenocysteinyl-tRNA(Sec) biosynthesis; selenocysteinyl-tRNA(Sec) from L-seryl-tRNA(Sec) (bacterial route): step 1/1. Its function is as follows. Converts seryl-tRNA(Sec) to selenocysteinyl-tRNA(Sec) required for selenoprotein biosynthesis. The chain is L-seryl-tRNA(Sec) selenium transferase from Escherichia coli O45:K1 (strain S88 / ExPEC).